Here is a 96-residue protein sequence, read N- to C-terminus: Small ribosomal subunit protein bS6 (96 aa).

This sequence belongs to the bacterial ribosomal protein bS6 family.

In terms of biological role, binds together with bS18 to 16S ribosomal RNA. In Streptococcus sanguinis (strain SK36), this protein is Small ribosomal subunit protein bS6.